Reading from the N-terminus, the 413-residue chain is Multifunctional CCA protein (413 aa).

Residues G8 and R11 each contribute to the ATP site. CTP is bound by residues G8 and R11. The Mg(2+) site is built by D21 and D23. Positions 91, 143, and 146 each coordinate ATP. CTP-binding residues include R91, R143, and R146. Positions 232-333 (TGVHVMMVVD…VRLFERSDAL (102 aa)) constitute an HD domain.

It belongs to the tRNA nucleotidyltransferase/poly(A) polymerase family. Bacterial CCA-adding enzyme type 1 subfamily. Monomer. Can also form homodimers and oligomers. Requires Mg(2+) as cofactor. Ni(2+) is required as a cofactor.

The enzyme catalyses a tRNA precursor + 2 CTP + ATP = a tRNA with a 3' CCA end + 3 diphosphate. It catalyses the reaction a tRNA with a 3' CCA end + 2 CTP + ATP = a tRNA with a 3' CCACCA end + 3 diphosphate. Its function is as follows. Catalyzes the addition and repair of the essential 3'-terminal CCA sequence in tRNAs without using a nucleic acid template. Adds these three nucleotides in the order of C, C, and A to the tRNA nucleotide-73, using CTP and ATP as substrates and producing inorganic pyrophosphate. tRNA 3'-terminal CCA addition is required both for tRNA processing and repair. Also involved in tRNA surveillance by mediating tandem CCA addition to generate a CCACCA at the 3' terminus of unstable tRNAs. While stable tRNAs receive only 3'-terminal CCA, unstable tRNAs are marked with CCACCA and rapidly degraded. This chain is Multifunctional CCA protein, found in Burkholderia cenocepacia (strain HI2424).